The sequence spans 181 residues: Isopentenyl-diphosphate Delta-isomerase (181 aa).

Residues H25 and H32 each coordinate Mn(2+). The region spanning 30–164 is the Nudix hydrolase domain; the sequence is PLHLAFSCWL…PWAFSPWMVM (135 aa). The active site involves C67. Position 67 (C67) interacts with Mg(2+). H69 provides a ligand contact to Mn(2+). E87 provides a ligand contact to Mg(2+). Mn(2+)-binding residues include E114 and E116. The active site involves E116.

It belongs to the IPP isomerase type 1 family. In terms of assembly, homodimer. Mg(2+) serves as cofactor. Mn(2+) is required as a cofactor.

It localises to the cytoplasm. It catalyses the reaction isopentenyl diphosphate = dimethylallyl diphosphate. It functions in the pathway isoprenoid biosynthesis; dimethylallyl diphosphate biosynthesis; dimethylallyl diphosphate from isopentenyl diphosphate: step 1/1. Functionally, catalyzes the 1,3-allylic rearrangement of the homoallylic substrate isopentenyl (IPP) to its highly electrophilic allylic isomer, dimethylallyl diphosphate (DMAPP). The polypeptide is Isopentenyl-diphosphate Delta-isomerase (Salmonella choleraesuis (strain SC-B67)).